The primary structure comprises 284 residues: Agamous-like MADS-box protein AGL49 (284 aa).

The segment at 1–20 (MAPRQKKPNKSDDDDGDLHR) is disordered. The region spanning 21–66 (KKQSFFKQRFPGFKKKASELSVLCGNSVGFICYGPDNDLHVWPQSQ) is the MADS-box domain.

Interacts with MEE14/CBP1.

It localises to the nucleus. Functionally, probable transcription factor that may function in the maintenance of the proper function of the central cell in pollen tube attraction. This chain is Agamous-like MADS-box protein AGL49, found in Arabidopsis thaliana (Mouse-ear cress).